We begin with the raw amino-acid sequence, 267 residues long: Tryptophan synthase alpha chain (267 aa).

Residues Glu-49 and Asp-60 each act as proton acceptor in the active site.

The protein belongs to the TrpA family. In terms of assembly, tetramer of two alpha and two beta chains.

The enzyme catalyses (1S,2R)-1-C-(indol-3-yl)glycerol 3-phosphate + L-serine = D-glyceraldehyde 3-phosphate + L-tryptophan + H2O. The protein operates within amino-acid biosynthesis; L-tryptophan biosynthesis; L-tryptophan from chorismate: step 5/5. In terms of biological role, the alpha subunit is responsible for the aldol cleavage of indoleglycerol phosphate to indole and glyceraldehyde 3-phosphate. The sequence is that of Tryptophan synthase alpha chain from Methylococcus capsulatus (strain ATCC 33009 / NCIMB 11132 / Bath).